Here is a 327-residue protein sequence, read N- to C-terminus: Urease accessory protein UreD (327 aa).

The protein belongs to the UreD family. In terms of assembly, ureD, UreF and UreG form a complex that acts as a GTP-hydrolysis-dependent molecular chaperone, activating the urease apoprotein by helping to assemble the nickel containing metallocenter of UreC. The UreE protein probably delivers the nickel.

It is found in the cytoplasm. Required for maturation of urease via the functional incorporation of the urease nickel metallocenter. This chain is Urease accessory protein UreD, found in Yersinia enterocolitica serotype O:8 / biotype 1B (strain NCTC 13174 / 8081).